Reading from the N-terminus, the 367-residue chain is Uptake hydrogenase small subunit (367 aa).

The tat-type signal signal peptide spans 1–45 (MTPTETFYEVMRRQGVTRRSFLKFCSLTATALGLGPAYTSEIAHA). 8 residues coordinate [4Fe-4S] cluster: C62, C65, C160, C194, H232, C235, C260, and C266. [3Fe-4S] cluster contacts are provided by C275, C294, and C297.

It belongs to the [NiFe]/[NiFeSe] hydrogenase small subunit family. Heterodimer of a large and a small subunit. It depends on [4Fe-4S] cluster as a cofactor. [3Fe-4S] cluster serves as cofactor. Predicted to be exported by the Tat system. The position of the signal peptide cleavage has been experimentally proven.

The protein resides in the cell membrane. The enzyme catalyses H2 + A = AH2. This enzyme recycles the H(2) produced by nitrogenase to increase the production of ATP and to protect nitrogenase against inhibition or damage by O(2) under carbon- or phosphate-limited conditions. The polypeptide is Uptake hydrogenase small subunit (hoxS) (Afipia carboxidovorans (strain ATCC 49405 / DSM 1227 / KCTC 32145 / OM5) (Oligotropha carboxidovorans)).